We begin with the raw amino-acid sequence, 115 residues long: Putative gamma-glutamylcyclotransferase VC_2546 (115 aa).

8 to 11 is a substrate binding site; that stretch reads YGTL. Glutamate 73 (proton acceptor) is an active-site residue.

It belongs to the gamma-glutamylcyclotransferase family.

Its function is as follows. Putative gamma-glutamylcyclotransferase. The protein is Putative gamma-glutamylcyclotransferase VC_2546 of Vibrio cholerae serotype O1 (strain ATCC 39315 / El Tor Inaba N16961).